Here is a 478-residue protein sequence, read N- to C-terminus: Allene oxide synthase 2 (478 aa).

Heme b is bound by residues Lys88, His119, and Lys123. Asn278 provides a ligand contact to (13S)-hydroperoxy-(9Z,11E,15Z)-octadecatrienoate. Heme b-binding residues include Lys427 and Cys429.

Belongs to the cytochrome P450 family. Heme b serves as cofactor. In terms of tissue distribution, weakly expressed in roots, shoots, leaves and flowers.

The catalysed reaction is (13S)-hydroperoxy-(9Z,11E,15Z)-octadecatrienoate = (9Z,13S,15Z)-12,13-epoxyoctadeca-9,11,15-trienoate + H2O. It functions in the pathway lipid metabolism; oxylipin biosynthesis. In terms of biological role, involved in the biosynthesis of jasmonic acid, a growth regulator that is implicated also as a signaling molecule in plant defense. Converts 13-hydroperoxylinolenic acid to 12,13-epoxylinolenic acid. This Oryza sativa subsp. japonica (Rice) protein is Allene oxide synthase 2 (CYP74A2).